A 452-amino-acid chain; its full sequence is Septin-10 (452 aa).

The Septin-type G domain occupies 36 to 302 (QGFCFNILCV…ELYRRCKLQE (267 aa)). The segment at 46–53 (GETGIGKS) is G1 motif. GTP-binding positions include 46–53 (GETGIGKS), Gly-101, 182–190 (KADTISKSE), Gly-236, and Arg-251. A G3 motif region spans residues 98–101 (NTVG). A G4 motif region spans residues 181–184 (AKAD). At Ser-414 the chain carries Phosphoserine.

Belongs to the TRAFAC class TrmE-Era-EngA-EngB-Septin-like GTPase superfamily. Septin GTPase family. In terms of assembly, septins polymerize into heterooligomeric protein complexes that form filaments, and can associate with cellular membranes, actin filaments and microtubules. GTPase activity is required for filament formation. Interacts with ADGB. Post-translationally, proteolytically cleaved in vitro in a calmodulin-dependent manner.

The protein resides in the cytoplasm. The protein localises to the cytoskeleton. It is found in the cell projection. It localises to the cilium. Its subcellular location is the flagellum. Its function is as follows. Filament-forming cytoskeletal GTPase. May play a role in cytokinesis (Potential). In Mus musculus (Mouse), this protein is Septin-10.